A 1178-amino-acid chain; its full sequence is Double-stranded RNA-specific adenosine deaminase (1178 aa).

The segment at 1–40 (MSQGFRGPTGVFPHQTQSYLDPSHEHSKWRYPQPQGPESY) is disordered. Asymmetric dimethylarginine occurs at positions 30 and 42. A Z-binding 1 domain is found at 135 to 201 (LSISQSPEQK…GKPPLWSLVP (67 aa)). Residues 135 to 204 (LSISQSPEQK…PLWSLVPLSQ (70 aa)) form an interaction with Z-DNA region. The interval 221–244 (EFPRGEPGLDSEDGDPASDLEGPS) is disordered. Positions 229–238 (LDSEDGDPAS) are enriched in acidic residues. Phosphoserine occurs at positions 231 and 238. The 65-residue stretch at 246-310 (PLDMAEIKEK…ATPPIWYLTD (65 aa)) folds into the Z-binding 2 domain. The segment at 316–383 (LQMKRSTHSA…SRHEARPGPM (68 aa)) is disordered. Low complexity predominate over residues 323–337 (HSAPAPTPTAVPEAT). The segment covering 360–379 (KRVENGQEPAIKHESRHEAR) has biased composition (basic and acidic residues). Lysine 371 participates in a covalent cross-link: Glycyl lysine isopeptide (Lys-Gly) (interchain with G-Cter in SUMO); alternate. Residue lysine 371 forms a Glycyl lysine isopeptide (Lys-Gly) (interchain with G-Cter in SUMO1); alternate linkage. Lysine 371 participates in a covalent cross-link: Glycyl lysine isopeptide (Lys-Gly) (interchain with G-Cter in SUMO2); alternate. Serine 434 bears the Phosphoserine mark. Positions 456–524 (NPVSGLLEYA…AVKAMAILLR (69 aa)) constitute a DRBM 1 domain. Residues 527–550 (KAKDSGQPEDLSHCPMEEDSEKPA) show a composition bias toward basic and acidic residues. Residues 527–564 (KAKDSGQPEDLSHCPMEEDSEKPAEAQAPSSSATSLFS) form a disordered region. Positions 554–564 (APSSSATSLFS) are enriched in polar residues. Serine 567, serine 582, and serine 589 each carry phosphoserine. Positions 567 to 635 (SPVTTLLECM…AEEAMKALQE (69 aa)) constitute a DRBM 2 domain. Residues 631–657 (KALQEEAASSADDQSGGANTDSLDESM) form a disordered region. The span at 635-648 (EEAASSADDQSGGA) shows a compositional bias: low complexity. Residues 665 to 674 (IGELVRYLNT) form an N-terminal extension of DRBM 3 and constituent of a bi-partite nuclear localization signal region. The DRBM 3 domain occupies 675 to 743 (NPVGGLLEYA…ADAALRVLIG (69 aa)). A C-terminal extension of DRBM 3 and constituent of a bi-partite nuclear localization signal region spans residues 744 to 750 (ESEKAEQ). Threonine 757 is modified (phosphothreonine). Serine 763, serine 772, and serine 774 each carry phosphoserine. Lysine 824 participates in a covalent cross-link: Glycyl lysine isopeptide (Lys-Gly) (interchain with G-Cter in SUMO2). Residues 835 to 1170 (SLGTGNRCVK…ISKPQEEKNF (336 aa)) enclose the A to I editase domain. Histidine 859 contacts Zn(2+). Residue glutamate 861 is the Proton donor of the active site. Residues cysteine 915 and cysteine 985 each coordinate Zn(2+).

In terms of assembly, homodimer. Homodimerization is essential for its catalytic activity. Isoform 5 can form heterodimers with ADARB1/ADAR2. Isoform 1 and isoform 5 (via DRBM 3 domain) interact with TNPO1. Isoform 5 (via DRBM domains) interacts with XPO5. Isoform 1 and isoform 5 can interact with UPF1. Isoform 1 interacts with ILF2/NF45 and ILF3/NF90. Binding to ILF3/NF90 up-regulates ILF3-mediated gene expression. Isoform 1 and isoform 5 interact with EIF2AK2/PKR. In terms of processing, sumoylation reduces RNA-editing activity. In terms of tissue distribution, highest levels in brain and spleen. Lowest levels in liver.

It is found in the cytoplasm. The protein localises to the nucleus. It localises to the nucleolus. The enzyme catalyses adenosine in double-stranded RNA + H2O + H(+) = inosine in double-stranded RNA + NH4(+). Catalyzes the hydrolytic deamination of adenosine to inosine in double-stranded RNA (dsRNA) referred to as A-to-I RNA editing. This may affect gene expression and function in a number of ways that include mRNA translation by changing codons and hence the amino acid sequence of proteins since the translational machinery read the inosine as a guanosine; pre-mRNA splicing by altering splice site recognition sequences; RNA stability by changing sequences involved in nuclease recognition; genetic stability in the case of RNA virus genomes by changing sequences during viral RNA replication; and RNA structure-dependent activities such as microRNA production or targeting or protein-RNA interactions. Can edit both viral and cellular RNAs and can edit RNAs at multiple sites (hyper-editing) or at specific sites (site-specific editing). Its cellular RNA substrates include: bladder cancer-associated protein (BLCAP), neurotransmitter receptors for glutamate (GRIA2) and serotonin (HTR2C) and GABA receptor (GABRA3). Site-specific RNA editing of transcripts encoding these proteins results in amino acid substitutions which consequently alters their functional activities. Exhibits low-level editing at the GRIA2 Q/R site, but edits efficiently at the R/G site and HOTSPOT1. Does not affect polyomavirus replication but provides protection against virus-induced cytopathic effects. Essential for embryonic development and cell survival and plays a critical role in the maintenance of hematopoietic stem cells. This is Double-stranded RNA-specific adenosine deaminase (Adar) from Mus musculus (Mouse).